The primary structure comprises 196 residues: N-(5'-phosphoribosyl)anthranilate isomerase (196 aa).

Belongs to the TrpF family.

It catalyses the reaction N-(5-phospho-beta-D-ribosyl)anthranilate = 1-(2-carboxyphenylamino)-1-deoxy-D-ribulose 5-phosphate. Its pathway is amino-acid biosynthesis; L-tryptophan biosynthesis; L-tryptophan from chorismate: step 3/5. In Nitratiruptor sp. (strain SB155-2), this protein is N-(5'-phosphoribosyl)anthranilate isomerase.